An 805-amino-acid polypeptide reads, in one-letter code: Leucine--tRNA ligase (805 aa).

A 'HIGH' region motif is present at residues 40 to 51 (PYPSGAGLHVGH). The 'KMSKS' region signature appears at 576–580 (KMSKS). K579 is an ATP binding site.

This sequence belongs to the class-I aminoacyl-tRNA synthetase family.

Its subcellular location is the cytoplasm. It carries out the reaction tRNA(Leu) + L-leucine + ATP = L-leucyl-tRNA(Leu) + AMP + diphosphate. This Anoxybacillus flavithermus (strain DSM 21510 / WK1) protein is Leucine--tRNA ligase.